The chain runs to 484 residues: Toluene efflux pump outer membrane protein TtgC (484 aa).

The first 17 residues, 1–17 (MTKSLLSLAVTAFILGG), serve as a signal peptide directing secretion. Cys18 carries N-palmitoyl cysteine lipidation. The S-diacylglycerol cysteine moiety is linked to residue Cys18.

The protein belongs to the outer membrane factor (OMF) (TC 1.B.17) family.

It is found in the cell outer membrane. In terms of biological role, the outer membrane component of a constitutive organic solvent efflux system. Is involved in export of toluene, styrene, m-xylene, propylbenzene and ethylbenzene. Also exports AMP and the antibiotics carbenicillin, nalidixic acid, chloramphenicol and tetracycline. In Pseudomonas putida (strain DOT-T1E), this protein is Toluene efflux pump outer membrane protein TtgC (ttgC).